A 45-amino-acid chain; its full sequence is Large ribosomal subunit protein bL34 (45 aa).

This sequence belongs to the bacterial ribosomal protein bL34 family.

In Streptomyces avermitilis (strain ATCC 31267 / DSM 46492 / JCM 5070 / NBRC 14893 / NCIMB 12804 / NRRL 8165 / MA-4680), this protein is Large ribosomal subunit protein bL34.